Here is a 338-residue protein sequence, read N- to C-terminus: MAGSHPYFNLPDSTHPSPPSGPPSLRWHQRCQPSDATNGLLVALLGGGLPAGFVGPLSRMAYQASNLPSLELLICRCLFHLPIALLLKLCGDPLLGPPDIRGRACFCALLNVLSIGCAYSAVQVVPTGNAATVLKGSSTVCSAVLTLCLESQGLSGYDWCGLLGSILGLIIIVGPGLWTLQEGTMGVYTALGYVQAFLGGLALSLGLLVYRSLHFPSFLPTVAFLSGLVGLLGSVPGLFVLHTPVLPSDLLSWSCVGAVGILTLVSFTCVGYAVTKAHPALVCAVLHSEVVVALILQYYMLPETVAPSDIMGAGVVLGNITIIPAWNLSCERTGKVEE.

The tract at residues 1 to 28 (MAGSHPYFNLPDSTHPSPPSGPPSLRWH) is disordered. 9 helical membrane-spanning segments follow: residues 37–57 (TNGLLVALLGGGLPAGFVGPL), 67–87 (LPSLELLICRCLFHLPIALLL), 105–125 (CFCALLNVLSIGCAYSAVQVV), 160–180 (CGLLGSILGLIIIVGPGLWTL), 190–210 (ALGYVQAFLGGLALSLGLLVY), 221–241 (TVAFLSGLVGLLGSVPGLFVL), 250–270 (LLSWSCVGAVGILTLVSFTCV), 281–301 (LVCAVLHSEVVVALILQYYML), and 310–330 (IMGAGVVLGNITIIPAWNLSC). The region spanning 49–174 (LPAGFVGPLS…SILGLIIIVG (126 aa)) is the EamA 1 domain. Positions 272 to 325 (YAVTKAHPALVCAVLHSEVVVALILQYYMLPETVAPSDIMGAGVVLGNITIIPA) constitute an EamA 2 domain.

The protein belongs to the SLC35G solute transporter family.

The protein localises to the membrane. The polypeptide is Solute carrier family 35 member G5 (SLC35G5) (Gorilla gorilla gorilla (Western lowland gorilla)).